Consider the following 309-residue polypeptide: Mycothiol acetyltransferase (309 aa).

2 N-acetyltransferase domains span residues Glu16–Pro158 and Val166–Thr309. Glu47 contributes to the 1D-myo-inositol 2-(L-cysteinylamino)-2-deoxy-alpha-D-glucopyranoside binding site. Leu92–Val94 serves as a coordination point for acetyl-CoA. Glu193, Lys232, and Glu241 together coordinate 1D-myo-inositol 2-(L-cysteinylamino)-2-deoxy-alpha-D-glucopyranoside. Residues Leu245–Ile247 and Gln252–Lys258 contribute to the acetyl-CoA site. 1D-myo-inositol 2-(L-cysteinylamino)-2-deoxy-alpha-D-glucopyranoside is bound at residue Tyr279.

Belongs to the acetyltransferase family. MshD subfamily. As to quaternary structure, monomer.

The catalysed reaction is 1D-myo-inositol 2-(L-cysteinylamino)-2-deoxy-alpha-D-glucopyranoside + acetyl-CoA = mycothiol + CoA + H(+). Functionally, catalyzes the transfer of acetyl from acetyl-CoA to desacetylmycothiol (Cys-GlcN-Ins) to form mycothiol. The protein is Mycothiol acetyltransferase of Streptomyces coelicolor (strain ATCC BAA-471 / A3(2) / M145).